Here is a 438-residue protein sequence, read N- to C-terminus: Protein translocase subunit SecY (438 aa).

A helical transmembrane segment spans residues 1 to 43; sequence MKIKPILELIPEVKRPLKGVSFKEKIQWTGLVLILYFILGTID. Residues 44 to 54 are Extracellular-facing; that stretch reads IYMGGAEMPAM. The helical intramembrane region spans 55–62; the sequence is FAFWQTVT. Residues 55–83 traverse the membrane as a discontinuously helical segment; that stretch reads FAFWQTVTASKMGTLITLGIGPIVTAGII. Residues 63-74 lie within the membrane without spanning it; sequence ASKMGTLITLGI. Positions 75–83 form an intramembrane region, helical; that stretch reads GPIVTAGII. Residues 84–104 lie on the Cytoplasmic side of the membrane; the sequence is MQLLVGSELISLDLSKPMNRA. A helical membrane pass occupies residues 105–129; the sequence is LFQGLQKLFGIFLCFLEAVMFVGAG. Topologically, residues 130 to 136 are extracellular; it reads AFGVVNS. A helical membrane pass occupies residues 137–161; the sequence is TLALILVLQLALGAILVIYLDEIVS. Topologically, residues 162 to 167 are cytoplasmic; sequence RYGIGS. The helical transmembrane segment at 168–186 threads the bilayer; the sequence is GIGLFIAAGVAQTIFVGAF. Residues 187–209 are Extracellular-facing; sequence GAEGYLWKFFSAMSVGSLGIAFE. Residues 210 to 231 form a helical membrane-spanning segment; it reads YILPILSTLFVFLVVVYVESIR. The Cytoplasmic segment spans residues 232-256; the sequence is VEIPLAHGRVKGAVGKYPIKFIYVS. The chain crosses the membrane as a helical span at residues 257 to 278; the sequence is NLPVILAAALFANIQLWGMFLD. Residues 279 to 315 lie on the Extracellular side of the membrane; sequence RMGYPILGQYSNGTAVSGIAYYFSTPYGISNIISDPL. A helical membrane pass occupies residues 316-335; that stretch reads HAIFYTLMMVIFCILFGLFW. The Cytoplasmic portion of the chain corresponds to 336–378; the sequence is VETSGLDAKSMAKKLGNLDMAIKGFRKSQKSIEQRLKRYIKPI. Residues 379 to 397 traverse the membrane as a helical segment; it reads TVMGSAFVGFLAAAADFTG. Over 398–400 the chain is Extracellular; it reads ALG. A helical membrane pass occupies residues 401–415; it reads GGTGVLLTVSIVYRL. Residues 416–438 are Cytoplasmic-facing; sequence YEQLVQEQLSELHPAVAKFVGKR.

The protein belongs to the SecY/SEC61-alpha family. Component of the Sec protein translocase complex. Heterotrimer consisting of alpha (SecY), beta (SecG) and gamma (SecE) subunits. The heterotrimers can form oligomers, although 1 heterotrimer is thought to be able to translocate proteins. Interacts with the ribosome. May interact with SecDF, and other proteins may be involved.

Its subcellular location is the cell membrane. Its function is as follows. The central subunit of the protein translocation channel SecYEG. Consists of two halves formed by TMs 1-5 and 6-10. These two domains form a lateral gate at the front which open onto the bilayer between TMs 2 and 7, and are clamped together by SecE at the back. The channel is closed by both a pore ring composed of hydrophobic SecY resides and a short helix (helix 2A) on the extracellular side of the membrane which forms a plug. The plug probably moves laterally to allow the channel to open. The ring and the pore may move independently. The chain is Protein translocase subunit SecY from Methanococcus vannielii.